Here is a 303-residue protein sequence, read N- to C-terminus: Probable 5-dehydro-4-deoxyglucarate dehydratase (303 aa).

Belongs to the DapA family.

It carries out the reaction 5-dehydro-4-deoxy-D-glucarate + H(+) = 2,5-dioxopentanoate + CO2 + H2O. The protein operates within carbohydrate acid metabolism; D-glucarate degradation; 2,5-dioxopentanoate from D-glucarate: step 2/2. This chain is Probable 5-dehydro-4-deoxyglucarate dehydratase, found in Azotobacter vinelandii (strain DJ / ATCC BAA-1303).